The primary structure comprises 386 residues: Heavy metal-associated isoprenylated plant protein 5 (386 aa).

Basic and acidic residues predominate over residues 1-16 (MGEVQEGPKVEQEKKP). The disordered stretch occupies residues 1 to 40 (MGEVQEGPKVEQEKKPAATVVPVETTDGKPKSGGGDSAAA). In terms of domain architecture, HMA 1 spans 49–112 (VSAFVYKVDM…KLEEKTKRKV (64 aa)). A metal cation is bound by residues cysteine 60 and cysteine 63. The tract at residues 129–153 (VGEKKADGGDKEAAPPAPAPAAPKE) is disordered. A compositionally biased stretch (basic and acidic residues) spans 130–141 (GEKKADGGDKEA). Residues 153–220 (ESVVPLKIRL…KLKRTVEPLV (68 aa)) enclose the HMA 2 domain. A metal cation-binding residues include cysteine 164 and cysteine 167. Basic and acidic residues-rich tracts occupy residues 223 to 245 (KKDD…KKEA) and 252 to 297 (EAKK…KKDG). Residues 223-301 (KKDDGAAENK…EKKKDGGGVP (79 aa)) are disordered. Cysteine methyl ester is present on cysteine 383. A lipid anchor (S-farnesyl cysteine) is attached at cysteine 383. A propeptide spans 384 to 386 (SVM) (removed in mature form).

It belongs to the HIPP family. In terms of processing, efficiently farnesylated in vitro.

In terms of biological role, heavy-metal-binding protein. Involved in disease resistance. The chain is Heavy metal-associated isoprenylated plant protein 5 from Arabidopsis thaliana (Mouse-ear cress).